The chain runs to 156 residues: 3-dehydroquinate dehydratase (156 aa).

The active-site Proton acceptor is the Tyr-22. Asn-73, His-79, and Asp-86 together coordinate substrate. His-99 acts as the Proton donor in catalysis. Residues Leu-100–Ser-101 and Arg-110 contribute to the substrate site.

The protein belongs to the type-II 3-dehydroquinase family. As to quaternary structure, homododecamer.

It catalyses the reaction 3-dehydroquinate = 3-dehydroshikimate + H2O. The protein operates within metabolic intermediate biosynthesis; chorismate biosynthesis; chorismate from D-erythrose 4-phosphate and phosphoenolpyruvate: step 3/7. Functionally, catalyzes a trans-dehydration via an enolate intermediate. The chain is 3-dehydroquinate dehydratase from Nitratiruptor sp. (strain SB155-2).